Consider the following 444-residue polypeptide: Tryptophan 5-hydroxylase 1 (444 aa).

The ACT domain maps to 19-94 (TLIFSLKNEV…TVLSVDSPDQ (76 aa)). Ser-58 bears the Phosphoserine; by PKA mark. L-tryptophan-binding residues include Tyr-235, Arg-257, and Thr-265. Fe cation contacts are provided by His-272, His-277, and Glu-317. Ser-336 and Ile-366 together coordinate L-tryptophan.

Belongs to the biopterin-dependent aromatic amino acid hydroxylase family. As to quaternary structure, homotetramer. Interacts with DNAJC12. Fe(2+) serves as cofactor. In terms of processing, ubiquitinated, leading to its degradation by the proteasome. Ubiquitinated is triggered by phosphorylation. Phosphorylated; triggering degradation by the proteasome.

It catalyses the reaction (6R)-L-erythro-5,6,7,8-tetrahydrobiopterin + L-tryptophan + O2 = 5-hydroxy-L-tryptophan + (4aS,6R)-4a-hydroxy-L-erythro-5,6,7,8-tetrahydrobiopterin. It functions in the pathway aromatic compound metabolism; serotonin biosynthesis; serotonin from L-tryptophan: step 1/2. Its function is as follows. Oxidizes L-tryptophan to 5-hydroxy-l-tryptophan in the rate-determining step of serotonin biosynthesis. The chain is Tryptophan 5-hydroxylase 1 (Tph1) from Rattus norvegicus (Rat).